A 363-amino-acid polypeptide reads, in one-letter code: Anhydro-N-acetylmuramic acid kinase (363 aa).

10–17 (GTSLDGLD) is an ATP binding site.

It belongs to the anhydro-N-acetylmuramic acid kinase family.

It carries out the reaction 1,6-anhydro-N-acetyl-beta-muramate + ATP + H2O = N-acetyl-D-muramate 6-phosphate + ADP + H(+). It participates in amino-sugar metabolism; 1,6-anhydro-N-acetylmuramate degradation. The protein operates within cell wall biogenesis; peptidoglycan recycling. Its function is as follows. Catalyzes the specific phosphorylation of 1,6-anhydro-N-acetylmuramic acid (anhMurNAc) with the simultaneous cleavage of the 1,6-anhydro ring, generating MurNAc-6-P. Is required for the utilization of anhMurNAc either imported from the medium or derived from its own cell wall murein, and thus plays a role in cell wall recycling. Contributes to intrinsic fosfomycin resistance in P.putida. The polypeptide is Anhydro-N-acetylmuramic acid kinase (Pseudomonas putida (strain ATCC 47054 / DSM 6125 / CFBP 8728 / NCIMB 11950 / KT2440)).